We begin with the raw amino-acid sequence, 167 residues long: Ubiquitin-fold modifier-conjugating enzyme 1 (167 aa).

The active-site Glycyl thioester intermediate is the cysteine 116. Residue lysine 122 forms a Glycyl lysine isopeptide (Lys-Gly) (interchain with G-Cter in UFM1) linkage.

The protein belongs to the ubiquitin-conjugating enzyme family. UFC1 subfamily. In terms of assembly, interacts with UBA5 (via C-terminus). Interacts with UFL1. Interacts with UFM1. Interacts with KIRREL3. Post-translationally, ufmylated at Lys-122. Deufmylated by UFSP1.

Functionally, E2-like enzyme which specifically catalyzes the second step in ufmylation. Accepts the ubiquitin-like modifier UFM1 from the E1 enzyme UBA5 and forms an intermediate with UFM1 via a thioester linkage. Ufmylation is involved in various processes, such as ribosome recycling, response to DNA damage, interferon response or reticulophagy (also called ER-phagy). This is Ubiquitin-fold modifier-conjugating enzyme 1 from Homo sapiens (Human).